Reading from the N-terminus, the 207-residue chain is 2,3-bisphosphoglycerate-dependent phosphoglycerate mutase (207 aa).

Substrate contacts are provided by residues 9–16 (RHGQSDWN), 22–23 (TG), arginine 61, 88–91 (ERDY), lysine 99, 115–116 (RR), and 159–160 (GN). Histidine 10 serves as the catalytic Tele-phosphohistidine intermediate. The active-site Proton donor/acceptor is the glutamate 88.

The protein belongs to the phosphoglycerate mutase family. BPG-dependent PGAM subfamily. As to quaternary structure, homodimer.

The enzyme catalyses (2R)-2-phosphoglycerate = (2R)-3-phosphoglycerate. Its pathway is carbohydrate degradation; glycolysis; pyruvate from D-glyceraldehyde 3-phosphate: step 3/5. Catalyzes the interconversion of 2-phosphoglycerate and 3-phosphoglycerate. This is 2,3-bisphosphoglycerate-dependent phosphoglycerate mutase from Beijerinckia indica subsp. indica (strain ATCC 9039 / DSM 1715 / NCIMB 8712).